A 227-amino-acid chain; its full sequence is dTTP/UTP pyrophosphatase (227 aa).

Asp98 (proton acceptor) is an active-site residue.

It belongs to the Maf family. YhdE subfamily. It depends on a divalent metal cation as a cofactor.

It localises to the cytoplasm. It carries out the reaction dTTP + H2O = dTMP + diphosphate + H(+). The enzyme catalyses UTP + H2O = UMP + diphosphate + H(+). Functionally, nucleoside triphosphate pyrophosphatase that hydrolyzes dTTP and UTP. May have a dual role in cell division arrest and in preventing the incorporation of modified nucleotides into cellular nucleic acids. This is dTTP/UTP pyrophosphatase from Bartonella quintana (strain Toulouse) (Rochalimaea quintana).